Consider the following 350-residue polypeptide: Uroporphyrinogen decarboxylase (350 aa).

Residues 28–32, D78, Y155, S210, and H325 each bind substrate; that span reads RQAGR.

It belongs to the uroporphyrinogen decarboxylase family. Homodimer.

The protein resides in the cytoplasm. The enzyme catalyses uroporphyrinogen III + 4 H(+) = coproporphyrinogen III + 4 CO2. Its pathway is porphyrin-containing compound metabolism; protoporphyrin-IX biosynthesis; coproporphyrinogen-III from 5-aminolevulinate: step 4/4. Functionally, catalyzes the decarboxylation of four acetate groups of uroporphyrinogen-III to yield coproporphyrinogen-III. The polypeptide is Uroporphyrinogen decarboxylase (Picosynechococcus sp. (strain ATCC 27264 / PCC 7002 / PR-6) (Agmenellum quadruplicatum)).